A 317-amino-acid polypeptide reads, in one-letter code: Single myb histone 6 (317 aa).

The HTH myb-type domain occupies 1 to 61 (MGAPKQRWTS…KWRNMNVIVS (61 aa)). Positions 28-57 (WRTILKDPEFSSTLCYRSNVDLKDKWRNMN) form a DNA-binding region, H-T-H motif. In terms of domain architecture, H15 spans 121-189 (KSHRLDNIIM…KVNRKYRIAP (69 aa)). Residues 244 to 288 (VAAARAVAEAEAIMAEAEAAAKEAEAAEAEAQAAQAFAEAAFLTL) adopt a coiled-coil conformation.

This sequence belongs to the histone H1/H5 family. SMH subfamily. In terms of assembly, forms a homodimer and heterodimers.

The protein localises to the nucleus. The protein resides in the chromosome. It is found in the nucleolus. Its subcellular location is the telomere. Binds preferentially double-stranded telomeric repeats, but may also bind to the single telomeric strand. The sequence is that of Single myb histone 6 (SMH6) from Zea mays (Maize).